We begin with the raw amino-acid sequence, 89 residues long: Small ribosomal subunit protein uS15 (89 aa).

Positions 1–10 are enriched in basic and acidic residues; sequence MSITAERKAE. A disordered region spans residues 1–24; that stretch reads MSITAERKAEVIQGNANKAGDTGS.

It belongs to the universal ribosomal protein uS15 family. As to quaternary structure, part of the 30S ribosomal subunit. Forms a bridge to the 50S subunit in the 70S ribosome, contacting the 23S rRNA.

Functionally, one of the primary rRNA binding proteins, it binds directly to 16S rRNA where it helps nucleate assembly of the platform of the 30S subunit by binding and bridging several RNA helices of the 16S rRNA. Its function is as follows. Forms an intersubunit bridge (bridge B4) with the 23S rRNA of the 50S subunit in the ribosome. This Rhodopseudomonas palustris (strain BisB5) protein is Small ribosomal subunit protein uS15.